Reading from the N-terminus, the 546-residue chain is Beta-amylase (546 aa).

A signal peptide spans 1 to 30 (MKNQFQYCCIVILSVVMLFVSLLIPQASSA). Position 79 (D79) interacts with substrate. Ca(2+)-binding residues include E86, D90, and Q91. Substrate contacts are provided by H119 and D127. Cysteines 121 and 129 form a disulfide. 2 residues coordinate Ca(2+): E171 and E174. E202 acts as the Proton donor in catalysis. The substrate site is built by K317, H322, and T360. The active-site Proton acceptor is the E397. Substrate-binding positions include 398–399 (NA) and R427. The CBM20 domain occupies 444–546 (LLGVTPVMQT…LKTTSHTSSW (103 aa)).

Belongs to the glycosyl hydrolase 14 family. In terms of assembly, monomer. Requires Ca(2+) as cofactor.

It catalyses the reaction Hydrolysis of (1-&gt;4)-alpha-D-glucosidic linkages in polysaccharides so as to remove successive maltose units from the non-reducing ends of the chains.. The protein is Beta-amylase (spoII) of Bacillus cereus.